The chain runs to 465 residues: UDP-N-acetylmuramate--L-alanine ligase (465 aa).

ATP is bound at residue 115–121; it reads GAHGKTT.

The protein belongs to the MurCDEF family.

The protein resides in the cytoplasm. The enzyme catalyses UDP-N-acetyl-alpha-D-muramate + L-alanine + ATP = UDP-N-acetyl-alpha-D-muramoyl-L-alanine + ADP + phosphate + H(+). It functions in the pathway cell wall biogenesis; peptidoglycan biosynthesis. Its function is as follows. Cell wall formation. The polypeptide is UDP-N-acetylmuramate--L-alanine ligase (Coxiella burnetii (strain CbuK_Q154) (Coxiella burnetii (strain Q154))).